Here is a 1318-residue protein sequence, read N- to C-terminus: DNA-directed RNA polymerase subunit beta' (1318 aa).

Cysteine 60, cysteine 62, cysteine 75, and cysteine 78 together coordinate Zn(2+). Residues aspartate 535, aspartate 537, and aspartate 539 each contribute to the Mg(2+) site. Zn(2+) is bound by residues cysteine 890, cysteine 967, cysteine 974, and cysteine 977.

Belongs to the RNA polymerase beta' chain family. As to quaternary structure, the RNAP catalytic core consists of 2 alpha, 1 beta, 1 beta' and 1 omega subunit. When a sigma factor is associated with the core the holoenzyme is formed, which can initiate transcription. It depends on Mg(2+) as a cofactor. Requires Zn(2+) as cofactor.

The enzyme catalyses RNA(n) + a ribonucleoside 5'-triphosphate = RNA(n+1) + diphosphate. Its function is as follows. DNA-dependent RNA polymerase catalyzes the transcription of DNA into RNA using the four ribonucleoside triphosphates as substrates. This Rhodococcus erythropolis (strain PR4 / NBRC 100887) protein is DNA-directed RNA polymerase subunit beta'.